The sequence spans 220 residues: Deoxyribose-phosphate aldolase 1 (220 aa).

The active-site Proton donor/acceptor is the Asp-89. The active-site Schiff-base intermediate with acetaldehyde is Lys-151. Lys-180 functions as the Proton donor/acceptor in the catalytic mechanism.

Belongs to the DeoC/FbaB aldolase family. DeoC type 1 subfamily.

It localises to the cytoplasm. It carries out the reaction 2-deoxy-D-ribose 5-phosphate = D-glyceraldehyde 3-phosphate + acetaldehyde. It participates in carbohydrate degradation; 2-deoxy-D-ribose 1-phosphate degradation; D-glyceraldehyde 3-phosphate and acetaldehyde from 2-deoxy-alpha-D-ribose 1-phosphate: step 2/2. In terms of biological role, catalyzes a reversible aldol reaction between acetaldehyde and D-glyceraldehyde 3-phosphate to generate 2-deoxy-D-ribose 5-phosphate. This chain is Deoxyribose-phosphate aldolase 1, found in Staphylococcus aureus (strain COL).